We begin with the raw amino-acid sequence, 141 residues long: Nucleoside diphosphate kinase (141 aa).

The ATP site is built by lysine 11, phenylalanine 59, arginine 87, threonine 93, arginine 104, and asparagine 114. Histidine 117 acts as the Pros-phosphohistidine intermediate in catalysis.

Belongs to the NDK family. As to quaternary structure, homotetramer. Mg(2+) is required as a cofactor.

It is found in the cytoplasm. It catalyses the reaction a 2'-deoxyribonucleoside 5'-diphosphate + ATP = a 2'-deoxyribonucleoside 5'-triphosphate + ADP. It carries out the reaction a ribonucleoside 5'-diphosphate + ATP = a ribonucleoside 5'-triphosphate + ADP. Functionally, major role in the synthesis of nucleoside triphosphates other than ATP. The ATP gamma phosphate is transferred to the NDP beta phosphate via a ping-pong mechanism, using a phosphorylated active-site intermediate. The chain is Nucleoside diphosphate kinase from Neisseria meningitidis serogroup A / serotype 4A (strain DSM 15465 / Z2491).